The following is a 350-amino-acid chain: 3-dehydroquinate synthase (350 aa).

NAD(+) contacts are provided by residues 106 to 110 (GVVGD), 130 to 131 (TS), Lys143, and Lys152. Glu185, His246, and His263 together coordinate Zn(2+).

This sequence belongs to the sugar phosphate cyclases superfamily. Dehydroquinate synthase family. Co(2+) serves as cofactor. Requires Zn(2+) as cofactor. NAD(+) is required as a cofactor.

Its subcellular location is the cytoplasm. The catalysed reaction is 7-phospho-2-dehydro-3-deoxy-D-arabino-heptonate = 3-dehydroquinate + phosphate. The protein operates within metabolic intermediate biosynthesis; chorismate biosynthesis; chorismate from D-erythrose 4-phosphate and phosphoenolpyruvate: step 2/7. Catalyzes the conversion of 3-deoxy-D-arabino-heptulosonate 7-phosphate (DAHP) to dehydroquinate (DHQ). The protein is 3-dehydroquinate synthase of Clostridium perfringens (strain SM101 / Type A).